The primary structure comprises 207 residues: MTARGNLFIVSAPSGAGKSSLISALLKDKPADMQVSVSHTTRAPRPGEINGQHYHFVNVEEFKALIAQNAFFEWAEVFGNYYGTSRHVIEHTLTQGIDVFLDIDWQGAQQVKAVMPEAIGVFILPPSRDELERRLTGRGQDSKDVIDSRMAQAVSEMSHYKEYDFIIVNDDFDTALADLRAIIRSQRLTGASQIHAQNDMLNDLLAG.

Residues 5–184 (GNLFIVSAPS…ALADLRAIIR (180 aa)) enclose the Guanylate kinase-like domain. ATP is bound at residue 12–19 (APSGAGKS).

Belongs to the guanylate kinase family.

It is found in the cytoplasm. The catalysed reaction is GMP + ATP = GDP + ADP. Its function is as follows. Essential for recycling GMP and indirectly, cGMP. The polypeptide is Guanylate kinase (Shewanella oneidensis (strain ATCC 700550 / JCM 31522 / CIP 106686 / LMG 19005 / NCIMB 14063 / MR-1)).